Reading from the N-terminus, the 948-residue chain is MKNKIILLWLLLIVILCTISNVKGCGMTTHNTVARRAYNFSSFDGFEQYQKYVSENFDVFDAGAAFPDFGYDCGGLANESEAAHWPPFLRAATKYLLETYPQPWSLDGIRLAVFLLGVTSHQIADISWHSIGGIQQGLIRAMAGQDFNGTYELAHGNADEGGEFELAYNYDLSWLSDKWYVPITDIKNIFHSMNYPRVDDENLLRCNAILYAGAMGVKIGGRFFYPEIAKKSPFLVDHYQDYFIGGLDDMSIWTSYCWPVLMGWMDGEDIGDFCFIQPDPNNDDDNQHLRLHHKHSILKNGSKIKEALSKSILNEMKITNNGKGVTFSLPNSMEKAINQVLNKFNQNPIGTLLEKYLPNLFNNKNKFYQENENEQYNHDEEELNIIDIDIDIEEEEQEEEEDKPIRMLSKNNNFKNYEYLNDKKKSSSSKLKNKSKKNIIKLNSDSNDLGTNFTTIYGQNMYSYFGKDIRSKDLNGDGFDDLIISSPGFGVPGSMQTGCVYYIISNGSSVTIDGGSGFTSEFDIDQVATGKLCGNETHAKFGWNIDVLDFNLDGIFDIIIGAPSSSNANLQYLGMIYIYLGEKNNPAGEWSTESDLPSITIQGIEYADTIGTVLRVADCNADSNADLILGSPHSAGGGTQRGTVQIFYSSKKRISGIPISLNDADYYGHGEVDYEWFGYEIKVAGQGDSSTLLVGSPNYHDEETAIVNIGKITSFPYNVNLNSFDLNPKFVMVGVNKNDKLGYSYNMVNGSLFGLDNVNDIMVLSLPTRGFGDDFDQVGEVVLIDIDNLSGFVEIKNVNLLLSIKGTTKYSRFGESLLIGKLESTDEFARLFVGAPLWTDSIDTGPGCVFTFLPNQHLTNDPAVLKQNIINNTPVVIYDSTHSIKTFRIDDDSGSSGGRSFNNKRKDSRFGFRILLSDFNNDGKNDLIVSADRDSSKILEGGSINIFQ.

An N-terminal signal peptide occupies residues 1-24; sequence MKNKIILLWLLLIVILCTISNVKG. N-linked (GlcNAc...) asparagine glycans are attached at residues Asn-39, Asn-78, Asn-148, Asn-300, Asn-433, Asn-452, Asn-506, and Asn-535. FG-GAP repeat units follow at residues 451-512, 526-588, 596-656, and 663-724; these read TNFT…SVTI, QVAT…NPAG, LPSI…RISG, and DADY…LNSF. N-linked (GlcNAc...) asparagine glycans are attached at residues Asn-749 and Asn-788. FG-GAP repeat units follow at residues 799–861 and 895–948; these read NLLL…LTND and SSGG…NIFQ.

This sequence belongs to the GPLD1 family. Requires Ca(2+) as cofactor.

Its subcellular location is the secreted. The enzyme catalyses a 6-(alpha-D-glucosaminyl)-1-(1,2-diacyl-sn-glycero-3-phospho)-1D-myo-inositol + H2O = 6-(alpha-D-glucosaminyl)-1D-myo-inositol + a 1,2-diacyl-sn-glycero-3-phosphate + H(+). Functionally, hydrolyzes the inositol phosphate linkage in proteins anchored by phosphatidylinositol glycans (GPI-anchor) thus releasing these proteins from the membrane. May also cleave GPI anchor intermediates intracellularly. The protein is Phosphatidylinositol-glycan-specific phospholipase D (pldG) of Dictyostelium discoideum (Social amoeba).